Reading from the N-terminus, the 30-residue chain is Photosystem I reaction center subunit XII (30 aa).

The helical transmembrane segment at 7-29 threads the bilayer; the sequence is VYIALMAALLASVLAIRLGATLY.

Belongs to the PsaM family.

Its subcellular location is the plastid. The protein resides in the chloroplast thylakoid membrane. The sequence is that of Photosystem I reaction center subunit XII from Thalassiosira pseudonana (Marine diatom).